Here is a 353-residue protein sequence, read N- to C-terminus: MASGKMRIVVLFGGRSAEHDVSVLSATNVMNALDPAKYEAVPVFVTRAGQWLLSRFVNGALEKPSSGAELCLVPGGCGRAIVVPDAGAPYEADKIDIIFPVLHGLHGEDGAVQGLAQVARVPLAGCGIPGSANALDKDIAKRLVNEAGLSTAKSVTITREEVPAFSALEQALGLPIFIKPARQGSSVGVHKVVTEADYQAAMSDGFTYDDKLLAEEFIQAREVECGVLEDEGGALFVSRAGEIVPAESHCFYSYDAKYIDADGTEIKVPAELPEQVENEIRAIATRAFRVLGCDSMARVDFFVTADRRIVLNEINTIPGFTDMSMYSKVMAVSGVSYPEIINRLVAHGLARGS.

An ATP-grasp domain is found at lysine 141–alanine 346. Glutamate 169–glutamate 224 contributes to the ATP binding site. Aspartate 300, glutamate 313, and asparagine 315 together coordinate Mg(2+).

This sequence belongs to the D-alanine--D-alanine ligase family. The cofactor is Mg(2+). Mn(2+) is required as a cofactor.

Its subcellular location is the cytoplasm. The enzyme catalyses 2 D-alanine + ATP = D-alanyl-D-alanine + ADP + phosphate + H(+). It participates in cell wall biogenesis; peptidoglycan biosynthesis. Its function is as follows. Cell wall formation. The sequence is that of D-alanine--D-alanine ligase A from Brucella suis biovar 1 (strain 1330).